The sequence spans 232 residues: RNA chaperone ProQ (232 aa).

The interval 105 to 182 (EAKARVQAQR…REEQHTPVSD (78 aa)) is disordered. Basic and acidic residues predominate over residues 117 to 136 (QQAKKREAAAAAGEKEDAPR). Residues 137–146 (RERKPRPTTP) show a composition bias toward basic residues. Over residues 147 to 177 (RRKEGAERKPRSQKPVEKAPKTVKAPREEQH) the composition is skewed to basic and acidic residues.

This sequence belongs to the ProQ family.

It localises to the cytoplasm. RNA chaperone with significant RNA binding, RNA strand exchange and RNA duplexing activities. May regulate ProP activity through an RNA-based, post-transcriptional mechanism. In Escherichia coli (strain UTI89 / UPEC), this protein is RNA chaperone ProQ.